The primary structure comprises 734 residues: Amino-acid acetyltransferase, mitochondrial (734 aa).

Positions 384-433 (YSETSSRSTRAEADSNFNLRDDIPLSSFTEQKSGELEYSPRHQNDSPTQQ) are disordered. Composition is skewed to basic and acidic residues over residues 392–406 (TRAE…RDDI) and 415–427 (KSGE…RHQN). In terms of domain architecture, N-acetyltransferase spans 555-724 (GVPQISLTDP…YEAVCKTIEP (170 aa)).

This sequence belongs to the acetyltransferase family.

It is found in the mitochondrion. The enzyme catalyses L-glutamate + acetyl-CoA = N-acetyl-L-glutamate + CoA + H(+). It functions in the pathway amino-acid biosynthesis; L-arginine biosynthesis; N(2)-acetyl-L-ornithine from L-glutamate: step 1/4. N-acetylglutamate synthase involved in arginine biosynthesis. The polypeptide is Amino-acid acetyltransferase, mitochondrial (arg2) (Botryotinia fuckeliana (strain B05.10) (Noble rot fungus)).